Reading from the N-terminus, the 329-residue chain is GTP 3',8-cyclase (329 aa).

A Radical SAM core domain is found at 1 to 229 (MNPVDYLRIS…ESTIKGNGPA (229 aa)). Residue Arg8 participates in GTP binding. Positions 15 and 19 each coordinate [4Fe-4S] cluster. Tyr21 serves as a coordination point for S-adenosyl-L-methionine. Residue Cys22 participates in [4Fe-4S] cluster binding. Residue Arg60 participates in GTP binding. Gly64 is an S-adenosyl-L-methionine binding site. Thr91 contributes to the GTP binding site. Ser115 is a binding site for S-adenosyl-L-methionine. Residue Lys155 coordinates GTP. Position 189 (Met189) interacts with S-adenosyl-L-methionine. Residues Cys252 and Cys255 each contribute to the [4Fe-4S] cluster site. GTP is bound at residue 257 to 259 (RMR). A [4Fe-4S] cluster-binding site is contributed by Cys269.

It belongs to the radical SAM superfamily. MoaA family. Monomer and homodimer. Requires [4Fe-4S] cluster as cofactor.

It carries out the reaction GTP + AH2 + S-adenosyl-L-methionine = (8S)-3',8-cyclo-7,8-dihydroguanosine 5'-triphosphate + 5'-deoxyadenosine + L-methionine + A + H(+). It participates in cofactor biosynthesis; molybdopterin biosynthesis. In terms of biological role, catalyzes the cyclization of GTP to (8S)-3',8-cyclo-7,8-dihydroguanosine 5'-triphosphate. This Rippkaea orientalis (strain PCC 8801 / RF-1) (Cyanothece sp. (strain PCC 8801)) protein is GTP 3',8-cyclase.